The sequence spans 113 residues: uncharacterized protein (113 aa).

A signal peptide spans 1–29 (MLVVYMCIWVLYLLLFLFLFLFIASPASL). The next 2 helical transmembrane spans lie at 34 to 54 (THIL…CAFF) and 56 to 76 (QVLC…FYFF).

It is found in the membrane. This is an uncharacterized protein from Saccharomyces cerevisiae (strain ATCC 204508 / S288c) (Baker's yeast).